A 556-amino-acid polypeptide reads, in one-letter code: Arginine--tRNA ligase (556 aa).

A 'HIGH' region motif is present at residues 129–139 (ANPTGPLHVGH).

Belongs to the class-I aminoacyl-tRNA synthetase family. Monomer.

It is found in the cytoplasm. The catalysed reaction is tRNA(Arg) + L-arginine + ATP = L-arginyl-tRNA(Arg) + AMP + diphosphate. This is Arginine--tRNA ligase from Desulfosudis oleivorans (strain DSM 6200 / JCM 39069 / Hxd3) (Desulfococcus oleovorans).